A 296-amino-acid polypeptide reads, in one-letter code: MNLKSPLFLRLSDRLDVYIRLMRADKPIGTLLLLWPTYWALWLASDGIPDLAVLAAFTIGTFLMRSAGCVINDFADRDFDGAVERTKNRPFAQGRVKKKEALLLTAFLCLLAALCLIPLNHLTWLMSLPALFLALTYPFTKRFFPIPQFYLGLAFSFGIPMAFAAVGNSVPVEAWILFAANVLWTLAYDTVYAMADKEDDLKIGIKTSAVTFGRYDIAAVMLCHGGFTLLMAVLGAVIGAAWAYWTAIPIVLLLQYRQYAAIKSRVRQICFETFLANNRIGWVWFAAIFAHTFFAK.

Transmembrane regions (helical) follow at residues 28–48 (IGTL…SDGI), 51–71 (LAVL…GCVI), 102–122 (LLLT…LNHL), 143–163 (FFPI…PMAF), 174–194 (AWIL…VYAM), 212–232 (FGRY…LLMA), 233–253 (VLGA…IVLL), and 274–294 (FLAN…HTFF).

The protein belongs to the UbiA prenyltransferase family. Requires Mg(2+) as cofactor.

Its subcellular location is the cell inner membrane. It carries out the reaction all-trans-octaprenyl diphosphate + 4-hydroxybenzoate = 4-hydroxy-3-(all-trans-octaprenyl)benzoate + diphosphate. It functions in the pathway cofactor biosynthesis; ubiquinone biosynthesis. Functionally, catalyzes the prenylation of para-hydroxybenzoate (PHB) with an all-trans polyprenyl group. Mediates the second step in the final reaction sequence of ubiquinone-8 (UQ-8) biosynthesis, which is the condensation of the polyisoprenoid side chain with PHB, generating the first membrane-bound Q intermediate 3-octaprenyl-4-hydroxybenzoate. The polypeptide is 4-hydroxybenzoate octaprenyltransferase (Neisseria gonorrhoeae (strain NCCP11945)).